The following is a 476-amino-acid chain: Ureidoglycolate hydrolase (476 aa).

An N-terminal signal peptide occupies residues 1–25; that stretch reads MESLKRFLCSIALLLISLLLPSSLA. Mn(2+) is bound by residues histidine 138, aspartate 149, glutamate 184, and histidine 254. Substrate is bound by residues 183-184, 254-257, histidine 290, asparagine 340, arginine 353, 423-424, and histidine 448; these read EE, HIEQ, and YH. Positions 276–391 are involved in dimerization; it reads APASLKVEFE…LSEFKIVNQD (116 aa). Histidine 448 lines the Mn(2+) pocket.

The protein belongs to the peptidase M20 family. In terms of assembly, homodimer. Mn(2+) serves as cofactor. The cofactor is Ni(2+). Requires Co(2+) as cofactor.

It is found in the endoplasmic reticulum. The catalysed reaction is (S)-ureidoglycolate + H2O + 2 H(+) = glyoxylate + 2 NH4(+) + CO2. Its pathway is nitrogen metabolism; (S)-allantoin degradation; glyoxylate from (S)-ureidoglycolate: step 1/1. Its function is as follows. Involved in the catabolism of purine nucleotides. Can use (S)-ureidoglycolate as substrate, but not (R)-ureidoglycolate or allantoate. The sequential activity of AAH, UGLYAH and UAH allows a complete purine breakdown without the intermediate generation of urea. This Arabidopsis thaliana (Mouse-ear cress) protein is Ureidoglycolate hydrolase.